Consider the following 1401-residue polypeptide: Enhancer of mRNA-decapping protein 4 (1401 aa).

N-acetylalanine is present on Ala2. Phosphoserine is present on residues Ser3 and Ser6. The interval 23 to 42 (DRPAGGPSAESPRPSSAYNG) is disordered. WD repeat units lie at residues 121-164 (QPVA…VISV), 167-206 (SERT…VWRL), 217-269 (ILVH…VWDL), 287-326 (KQGF…FWQI), 335-385 (RCLH…MWCT), 389-426 (TCLQ…LSDV), and 432-475 (YVME…LRHT). Lys125 is modified (N6-acetyllysine). Positions 545–565 (TFGESRPELGSEGLGSAAHGS) are disordered. A phosphoserine mark is found at Ser560, Ser565, Ser583, and Ser585. 2 disordered regions span residues 603 to 628 (ASLQ…SSSS) and 662 to 702 (DGSL…QVPT). Low complexity predominate over residues 609–628 (TASPSSSSSGSSSSSSSSSS). Over residues 663 to 675 (GSLTMSSSGSLQA) the composition is skewed to polar residues. Phosphoserine is present on Ser676. Residues 677–689 (PRGLLPGLLPAPA) show a composition bias toward low complexity. Position 693 is a phosphothreonine (Thr693). Phosphoserine occurs at positions 708, 723, and 725. Disordered stretches follow at residues 717–741 (LGLP…TALS) and 778–808 (LLSP…HNTP). Positions 722–741 (ASPSRTRSPDVISSASTALS) are enriched in polar residues. Thr727 is subject to Phosphothreonine. A phosphoserine mark is found at Ser729 and Ser741. Phosphothreonine is present on Thr821. 7 positions are modified to phosphoserine: Ser844, Ser871, Ser875, Ser879, Ser887, Ser890, and Ser892. The disordered stretch occupies residues 868-946 (QRDSQDASAE…RLTEHQVAEP (79 aa)). The sufficient for nuclear localization stretch occupies residues 913–934 (GSPRTSPKLKRKSKKDDGDAAM). Residues 954–1025 (IWQQQRELAE…GGQLQEQLTQ (72 aa)) adopt a coiled-coil conformation. Phosphoserine is present on residues Ser967 and Ser1380.

It belongs to the WD repeat EDC4 family. As to quaternary structure, part of a decapping complex consisting of DCP1A, DCP2, EDC3, EDC4 and probably DDX6. Part of a complex consisting of DCP1A, EDC3, EDC4 and DDX6. Part of a complex consisting of DCP1B, EDC3, EDC4 and DDX6. Interacts with DCP2. Interacts with RC3H1. Interacts with NBDY. Interacts with TEX19. Interacts with LSM14A. Interacts with DDX6. In terms of assembly, (Microbial infection) Interacts with rotavirus A non-structural protein 2; this interaction probably plays a role in the sequestration of EDC4 in viral factories. Interacts with rotavirus A non-structural protein 5; this interaction probably plays a role in its sequestration in viral factories.

It localises to the cytoplasm. The protein localises to the P-body. It is found in the nucleus. In terms of biological role, in the process of mRNA degradation, seems to play a role in mRNA decapping. Component of a complex containing DCP2 and DCP1A which functions in decapping of ARE-containing mRNAs. Promotes complex formation between DCP1A and DCP2. Enhances the catalytic activity of DCP2 (in vitro). This Homo sapiens (Human) protein is Enhancer of mRNA-decapping protein 4 (EDC4).